Consider the following 305-residue polypeptide: MLKQRTIKSLVKTVGIGLHSGRKVTLTLRPAAAGTGIVFTRVDLDPAVEIPATASAIGDTRLASVLQKDGARVSTVEHLMSACAGLGIDNLYVDVDAEEIPIMDGSAASFVFLLQSAGIEEQGAAKRFIRVTKPVEIREGDKLARLDPYFGFKLSFTIEFRHPAVDKTGQTFEIDFADTSYTREIARARTFGFAHEVEMLREVGLARGGSLDNAIVLDEHRMLNNDELRYGDEFVRHKILDAIGDLYVVGHPLIAAYTAHKSGHGLNNALLRALLADETAYEIVTFDKIEEAPRAFLPQLQPAFS.

H78, H237, and D241 together coordinate Zn(2+). H264 acts as the Proton donor in catalysis.

The protein belongs to the LpxC family. The cofactor is Zn(2+).

The enzyme catalyses a UDP-3-O-[(3R)-3-hydroxyacyl]-N-acetyl-alpha-D-glucosamine + H2O = a UDP-3-O-[(3R)-3-hydroxyacyl]-alpha-D-glucosamine + acetate. It functions in the pathway glycolipid biosynthesis; lipid IV(A) biosynthesis; lipid IV(A) from (3R)-3-hydroxytetradecanoyl-[acyl-carrier-protein] and UDP-N-acetyl-alpha-D-glucosamine: step 2/6. In terms of biological role, catalyzes the hydrolysis of UDP-3-O-myristoyl-N-acetylglucosamine to form UDP-3-O-myristoylglucosamine and acetate, the committed step in lipid A biosynthesis. The protein is UDP-3-O-acyl-N-acetylglucosamine deacetylase of Ralstonia pickettii (strain 12J).